The sequence spans 701 residues: Elongation factor G (701 aa).

One can recognise a tr-type G domain in the interval 11–287 (TKVRNIGIMA…AVIDYLPSPL (277 aa)). Residues 20 to 27 (AHIDAGKT), 84 to 88 (DTPGH), and 138 to 141 (NKMD) contribute to the GTP site.

The protein belongs to the TRAFAC class translation factor GTPase superfamily. Classic translation factor GTPase family. EF-G/EF-2 subfamily.

It is found in the cytoplasm. Catalyzes the GTP-dependent ribosomal translocation step during translation elongation. During this step, the ribosome changes from the pre-translocational (PRE) to the post-translocational (POST) state as the newly formed A-site-bound peptidyl-tRNA and P-site-bound deacylated tRNA move to the P and E sites, respectively. Catalyzes the coordinated movement of the two tRNA molecules, the mRNA and conformational changes in the ribosome. The sequence is that of Elongation factor G from Mycobacterium marinum (strain ATCC BAA-535 / M).